The primary structure comprises 510 residues: GMP synthase [glutamine-hydrolyzing] (510 aa).

In terms of domain architecture, Glutamine amidotransferase type-1 spans Asp5–Thr194. Cys82 acts as the Nucleophile in catalysis. Residues His169 and Glu171 contribute to the active site. One can recognise a GMPS ATP-PPase domain in the interval Trp195 to Arg385. Position 222 to 228 (Ser222 to Ser228) interacts with ATP.

In terms of assembly, homodimer.

The catalysed reaction is XMP + L-glutamine + ATP + H2O = GMP + L-glutamate + AMP + diphosphate + 2 H(+). It functions in the pathway purine metabolism; GMP biosynthesis; GMP from XMP (L-Gln route): step 1/1. Its function is as follows. Catalyzes the synthesis of GMP from XMP. This is GMP synthase [glutamine-hydrolyzing] from Campylobacter fetus subsp. fetus (strain 82-40).